Here is a 395-residue protein sequence, read N- to C-terminus: MRVKIIVPSLGESITEATIAKWYKKQGDSVKTDELLLEIETEKVTLEVNAPCNGTIGKISKTEGANVAVGEEIGEINEGASANTAGTNNESAKAQAVTQPTSEKPAVANNTLAPSVQKLVTENKLDPNNIKGTGRDGRITKGDVLATINTTTTSAPAISKSNEERVQRVRMSRLRKTIAQRLKDSQNTAAILTTFNEIDMSKVIALRNQYKEEFEKKHAVKLGFMSFFVKATIEALKLIPSVNAEIDGDDLVYKNYYDIGVAVGTEQGLVVPVVRDADKMGFAEVEKTIGILAKQAREGKLSMADLSGGTFSISNGGVYGSLLSTPIINPPQSGILGLHKTEERAVVIDGKIEIRPMMYIALSYDHRIIDGKEGVSFLVKIKQLIENPEKLLLNL.

Positions 2-77 (RVKIIVPSLG…AVGEEIGEIN (76 aa)) constitute a Lipoyl-binding domain. Residue Lys-43 is modified to N6-lipoyllysine. The Peripheral subunit-binding (PSBD) domain occupies 111 to 148 (TLAPSVQKLVTENKLDPNNIKGTGRDGRITKGDVLATI). Residues His-366 and Asp-370 contribute to the active site.

The protein belongs to the 2-oxoacid dehydrogenase family. Forms a 24-polypeptide structural core with octahedral symmetry. Part of the 2-oxoglutarate dehydrogenase (OGDH) complex composed of E1 (2-oxoglutarate dehydrogenase), E2 (dihydrolipoamide succinyltransferase) and E3 (dihydrolipoamide dehydrogenase); the complex contains multiple copies of the three enzymatic components (E1, E2 and E3). (R)-lipoate is required as a cofactor.

It carries out the reaction N(6)-[(R)-dihydrolipoyl]-L-lysyl-[protein] + succinyl-CoA = N(6)-[(R)-S(8)-succinyldihydrolipoyl]-L-lysyl-[protein] + CoA. It participates in amino-acid degradation; L-lysine degradation via saccharopine pathway; glutaryl-CoA from L-lysine: step 6/6. E2 component of the 2-oxoglutarate dehydrogenase (OGDH) complex which catalyzes the second step in the conversion of 2-oxoglutarate to succinyl-CoA and CO(2). The protein is Dihydrolipoyllysine-residue succinyltransferase component of 2-oxoglutarate dehydrogenase complex (sucB) of Rickettsia conorii (strain ATCC VR-613 / Malish 7).